The following is a 442-amino-acid chain: tRNA modification GTPase MnmE (442 aa).

(6S)-5-formyl-5,6,7,8-tetrahydrofolate contacts are provided by R27, E84, and K124. A TrmE-type G domain is found at 221–366 (GLHVVIVGAP…LLDALQAFAE (146 aa)). GTP is bound by residues 231 to 236 (NAGKSS), 250 to 256 (SKEAGTT), and 275 to 278 (DTAG). Residues S235 and T256 each contribute to the Mg(2+) site. Residue K442 participates in (6S)-5-formyl-5,6,7,8-tetrahydrofolate binding.

The protein belongs to the TRAFAC class TrmE-Era-EngA-EngB-Septin-like GTPase superfamily. TrmE GTPase family. As to quaternary structure, homodimer. Heterotetramer of two MnmE and two MnmG subunits. Requires K(+) as cofactor.

It is found in the cytoplasm. Exhibits a very high intrinsic GTPase hydrolysis rate. Involved in the addition of a carboxymethylaminomethyl (cmnm) group at the wobble position (U34) of certain tRNAs, forming tRNA-cmnm(5)s(2)U34. The sequence is that of tRNA modification GTPase MnmE from Brucella suis biovar 1 (strain 1330).